The primary structure comprises 293 residues: 4-hydroxybenzoate octaprenyltransferase (293 aa).

A run of 8 helical transmembrane segments spans residues 26–46 (IGTLLLLWPCLMALLFAAKGM), 49–69 (IKVLLIFILGVVIMRACGCII), 102–122 (LFALLGLLAFALVLLLNPLVV), 148–168 (FLGIVWSWSIPMAYAAQLGEV), 173–193 (WWLFAANWCWTVAYDTMYAMI), 217–237 (WIAVFQLMAFGCFLMAGLSAE), 240–260 (FIYALGLLGFIAFSVYQQRLI), and 272–292 (FLNNNWVGMLLFLTLAADYLL).

The protein belongs to the UbiA prenyltransferase family. Mg(2+) is required as a cofactor.

The protein resides in the cell inner membrane. It catalyses the reaction all-trans-octaprenyl diphosphate + 4-hydroxybenzoate = 4-hydroxy-3-(all-trans-octaprenyl)benzoate + diphosphate. Its pathway is cofactor biosynthesis; ubiquinone biosynthesis. Functionally, catalyzes the prenylation of para-hydroxybenzoate (PHB) with an all-trans polyprenyl group. Mediates the second step in the final reaction sequence of ubiquinone-8 (UQ-8) biosynthesis, which is the condensation of the polyisoprenoid side chain with PHB, generating the first membrane-bound Q intermediate 3-octaprenyl-4-hydroxybenzoate. The polypeptide is 4-hydroxybenzoate octaprenyltransferase (Shewanella denitrificans (strain OS217 / ATCC BAA-1090 / DSM 15013)).